A 49-amino-acid chain; its full sequence is Large ribosomal subunit protein bL33 (49 aa).

The protein belongs to the bacterial ribosomal protein bL33 family.

The polypeptide is Large ribosomal subunit protein bL33 (Clostridium botulinum (strain Alaska E43 / Type E3)).